Reading from the N-terminus, the 242-residue chain is Putative ABC transporter ATP-binding protein TTE0246 (242 aa).

In terms of domain architecture, ABC transporter spans 5-242 (FELKNVSYFY…EKLLLKANLI (238 aa)). 38–45 (GANGSGKS) lines the ATP pocket.

This sequence belongs to the ABC transporter superfamily.

Its subcellular location is the cell membrane. In terms of biological role, probably part of an ABC transporter complex. Responsible for energy coupling to the transport system. The polypeptide is Putative ABC transporter ATP-binding protein TTE0246 (Caldanaerobacter subterraneus subsp. tengcongensis (strain DSM 15242 / JCM 11007 / NBRC 100824 / MB4) (Thermoanaerobacter tengcongensis)).